The primary structure comprises 346 residues: N-acetyl-gamma-glutamyl-phosphate reductase (346 aa).

C149 is an active-site residue.

The protein belongs to the NAGSA dehydrogenase family. Type 1 subfamily.

It is found in the cytoplasm. The catalysed reaction is N-acetyl-L-glutamate 5-semialdehyde + phosphate + NADP(+) = N-acetyl-L-glutamyl 5-phosphate + NADPH + H(+). The protein operates within amino-acid biosynthesis; L-arginine biosynthesis; N(2)-acetyl-L-ornithine from L-glutamate: step 3/4. Its function is as follows. Catalyzes the NADPH-dependent reduction of N-acetyl-5-glutamyl phosphate to yield N-acetyl-L-glutamate 5-semialdehyde. The polypeptide is N-acetyl-gamma-glutamyl-phosphate reductase (Geobacter sulfurreducens (strain ATCC 51573 / DSM 12127 / PCA)).